Reading from the N-terminus, the 236-residue chain is 1-(5-phosphoribosyl)-5-[(5-phosphoribosylamino)methylideneamino] imidazole-4-carboxamide isomerase (236 aa).

The active-site Proton acceptor is aspartate 8. The active-site Proton donor is aspartate 128.

Belongs to the HisA/HisF family.

Its subcellular location is the cytoplasm. It catalyses the reaction 1-(5-phospho-beta-D-ribosyl)-5-[(5-phospho-beta-D-ribosylamino)methylideneamino]imidazole-4-carboxamide = 5-[(5-phospho-1-deoxy-D-ribulos-1-ylimino)methylamino]-1-(5-phospho-beta-D-ribosyl)imidazole-4-carboxamide. It participates in amino-acid biosynthesis; L-histidine biosynthesis; L-histidine from 5-phospho-alpha-D-ribose 1-diphosphate: step 4/9. The sequence is that of 1-(5-phosphoribosyl)-5-[(5-phosphoribosylamino)methylideneamino] imidazole-4-carboxamide isomerase from Nitrosopumilus maritimus (strain SCM1).